The chain runs to 120 residues: NAD(P)H-quinone oxidoreductase subunit 3, chloroplastic (120 aa).

3 consecutive transmembrane segments (helical) span residues 9-29, 64-84, and 88-108; these read IFWT…WISG, MFAL…PWAM, and VLGV…VVGL.

It belongs to the complex I subunit 3 family. NDH is composed of at least 16 different subunits, 5 of which are encoded in the nucleus.

The protein resides in the plastid. The protein localises to the chloroplast thylakoid membrane. It carries out the reaction a plastoquinone + NADH + (n+1) H(+)(in) = a plastoquinol + NAD(+) + n H(+)(out). It catalyses the reaction a plastoquinone + NADPH + (n+1) H(+)(in) = a plastoquinol + NADP(+) + n H(+)(out). NDH shuttles electrons from NAD(P)H:plastoquinone, via FMN and iron-sulfur (Fe-S) centers, to quinones in the photosynthetic chain and possibly in a chloroplast respiratory chain. The immediate electron acceptor for the enzyme in this species is believed to be plastoquinone. Couples the redox reaction to proton translocation, and thus conserves the redox energy in a proton gradient. The chain is NAD(P)H-quinone oxidoreductase subunit 3, chloroplastic from Zea mays (Maize).